We begin with the raw amino-acid sequence, 428 residues long: Probable protein phosphatase 2C 12 (428 aa).

Residues 24-293 (KIDNPELIHG…DDTTCIVVDI (270 aa)) form the PPM-type phosphatase domain. Residues D69, G70, D245, and D284 each contribute to the Mn(2+) site. The segment at 301–331 (ASVPPPKKQGKGMLKSMFKRKTSDSSSNIEK) is disordered.

It belongs to the PP2C family. Mg(2+) serves as cofactor. Requires Mn(2+) as cofactor.

It carries out the reaction O-phospho-L-seryl-[protein] + H2O = L-seryl-[protein] + phosphate. The enzyme catalyses O-phospho-L-threonyl-[protein] + H2O = L-threonyl-[protein] + phosphate. The chain is Probable protein phosphatase 2C 12 from Arabidopsis thaliana (Mouse-ear cress).